The following is a 154-amino-acid chain: Endoribonuclease YbeY (154 aa).

3 residues coordinate Zn(2+): H113, H117, and H123.

The protein belongs to the endoribonuclease YbeY family. Zn(2+) serves as cofactor.

Its subcellular location is the cytoplasm. Functionally, single strand-specific metallo-endoribonuclease involved in late-stage 70S ribosome quality control and in maturation of the 3' terminus of the 16S rRNA. This Vibrio parahaemolyticus serotype O3:K6 (strain RIMD 2210633) protein is Endoribonuclease YbeY.